We begin with the raw amino-acid sequence, 343 residues long: N-acetyl-gamma-glutamyl-phosphate reductase (343 aa).

Residue Cys147 is part of the active site.

It belongs to the NAGSA dehydrogenase family. Type 1 subfamily.

The protein localises to the cytoplasm. The catalysed reaction is N-acetyl-L-glutamate 5-semialdehyde + phosphate + NADP(+) = N-acetyl-L-glutamyl 5-phosphate + NADPH + H(+). The protein operates within amino-acid biosynthesis; L-arginine biosynthesis; N(2)-acetyl-L-ornithine from L-glutamate: step 3/4. Catalyzes the NADPH-dependent reduction of N-acetyl-5-glutamyl phosphate to yield N-acetyl-L-glutamate 5-semialdehyde. This Staphylococcus saprophyticus subsp. saprophyticus (strain ATCC 15305 / DSM 20229 / NCIMB 8711 / NCTC 7292 / S-41) protein is N-acetyl-gamma-glutamyl-phosphate reductase.